Here is a 281-residue protein sequence, read N- to C-terminus: Tryptophan 2,3-dioxygenase (281 aa).

Substrate-binding positions include 50–54 (FIIQH), Tyr112, and Arg116. Position 239 (His239) interacts with heme. Thr253 is a binding site for substrate.

This sequence belongs to the tryptophan 2,3-dioxygenase family. Homotetramer. Heme serves as cofactor.

It carries out the reaction L-tryptophan + O2 = N-formyl-L-kynurenine. It functions in the pathway amino-acid degradation; L-tryptophan degradation via kynurenine pathway; L-kynurenine from L-tryptophan: step 1/2. Functionally, heme-dependent dioxygenase that catalyzes the oxidative cleavage of the L-tryptophan (L-Trp) pyrrole ring and converts L-tryptophan to N-formyl-L-kynurenine. Catalyzes the oxidative cleavage of the indole moiety. The sequence is that of Tryptophan 2,3-dioxygenase from Saccharopolyspora erythraea (strain ATCC 11635 / DSM 40517 / JCM 4748 / NBRC 13426 / NCIMB 8594 / NRRL 2338).